Here is a 1229-residue protein sequence, read N- to C-terminus: Nuclear envelope pore membrane protein POM 121C (1229 aa).

Over residues 1 to 10 (MSPAAAAAGA) the composition is skewed to low complexity. Positions 1–24 (MSPAAAAAGAGERRRPIASVRDGR) are disordered. Positions 1–40 (MSPAAAAAGAGERRRPIASVRDGRGRGCGGPAGAALLGLS) are cisternal side. The tract at residues 1–398 (MSPAAAAAGA…AITSSYSSTR (398 aa)) is required for targeting to the nucleus and nuclear pore complex. The segment covering 11–24 (GERRRPIASVRDGR) has biased composition (basic and acidic residues). The helical transmembrane segment at 41 to 61 (LVGLLLYLVPAAAALAWLAVG) threads the bilayer. The interval 62 to 1229 (TTAAWWGLSR…QARRQHTRKK (1168 aa)) is pore side. Ser-81 is modified (phosphoserine). Disordered regions lie at residues 90–200 (RTLF…LPDR), 296–507 (KKKK…LGYS), 579–747 (KKMQ…TAPT), 936–966 (PLPSYPGANPQPAFGAAEGQPPGAAKPALTP), and 1202–1229 (PSFSIGAGSKTPGARQRLQARRQHTRKK). Positions 155-166 (ARPAPRSTPPSQ) are enriched in pro residues. Residues 176 to 189 (PSLPTPLLRPSGRP) show a composition bias toward low complexity. 5 positions are modified to phosphoserine: Ser-322, Ser-328, Ser-348, Ser-370, and Ser-373. Polar residues predominate over residues 374-400 (LTGAYTSGIPSSSRNAITSSYSSTRGI). Over residues 409 to 422 (PSSSPFSSPASSRS) the composition is skewed to low complexity. Composition is skewed to basic and acidic residues over residues 427-439 (RPAKKIREEELCH) and 449-463 (ADKESQGEKAADTTP). Residues 468–479 (NSNSQSTPGSSG) show a composition bias toward polar residues. Positions 612–629 (PPLGLSQSGPPGLLPSPS) are enriched in low complexity. A compositionally biased stretch (polar residues) spans 660–673 (QAETATKPQATSAP). Low complexity-rich tracts occupy residues 689 to 703 (SPSSPAAPAASSASP) and 726 to 747 (SVSATAPSSSSLPTTTSTTAPT). The segment covering 1219-1229 (LQARRQHTRKK) has biased composition (basic residues).

This sequence belongs to the POM121 family.

The protein resides in the nucleus. It localises to the nuclear pore complex. It is found in the nucleus membrane. The protein localises to the endoplasmic reticulum membrane. Essential component of the nuclear pore complex (NPC). The repeat-containing domain may be involved in anchoring components of the pore complex to the pore membrane. When overexpressed in cells induces the formation of cytoplasmic annulate lamellae (AL). In Homo sapiens (Human), this protein is Nuclear envelope pore membrane protein POM 121C (POM121C).